A 240-amino-acid chain; its full sequence is Uridylate kinase (240 aa).

An ATP-binding site is contributed by 12-15 (KLSG). Residues 20-25 (GEDGFG) form an involved in allosteric activation by GTP region. Glycine 54 contacts UMP. Positions 55 and 59 each coordinate ATP. UMP contacts are provided by residues aspartate 74 and 135–142 (TGNPYFST). The ATP site is built by asparagine 163, tyrosine 169, and aspartate 172.

Belongs to the UMP kinase family. Homohexamer.

The protein resides in the cytoplasm. It carries out the reaction UMP + ATP = UDP + ADP. It functions in the pathway pyrimidine metabolism; CTP biosynthesis via de novo pathway; UDP from UMP (UMPK route): step 1/1. With respect to regulation, allosterically activated by GTP. Probably inhibited by UTP. Catalyzes the reversible phosphorylation of UMP to UDP. The chain is Uridylate kinase (pyrH) from Enterococcus faecalis (strain ATCC 700802 / V583).